The primary structure comprises 384 residues: Putative aminohydrolase MTH_994 (384 aa).

Positions 60, 62, 207, and 291 each coordinate Zn(2+).

Belongs to the metallo-dependent hydrolases superfamily. ATZ/TRZ family.

The sequence is that of Putative aminohydrolase MTH_994 from Methanothermobacter thermautotrophicus (strain ATCC 29096 / DSM 1053 / JCM 10044 / NBRC 100330 / Delta H) (Methanobacterium thermoautotrophicum).